Here is a 500-residue protein sequence, read N- to C-terminus: Putative DNA recombinase (500 aa).

One can recognise a Resolvase/invertase-type recombinase catalytic domain in the interval 1–144 (MIAIYVRVST…SGRLQKMKKG (144 aa)). S9 acts as the O-(5'-phospho-DNA)-serine intermediate in catalysis. The segment at residues 152–288 (LYGYKFVKEK…QELLGQSKRK (137 aa)) is a DNA-binding region (recombinase). The stretch at 372-448 (KEAEQSNHLS…IQSKMKVLDD (77 aa)) forms a coiled coil.

It in the N-terminal section; belongs to the site-specific recombinase resolvase family.

Putative site-specific recombinase having a very important role in sporulation. It probably plays a role in the recombination of SpoIIIC and SpoIVCB to form sigma K factor. This Bacillus subtilis (strain 168) protein is Putative DNA recombinase (cisA).